The primary structure comprises 139 residues: ATP synthase epsilon chain (139 aa).

Belongs to the ATPase epsilon chain family. As to quaternary structure, F-type ATPases have 2 components, CF(1) - the catalytic core - and CF(0) - the membrane proton channel. CF(1) has five subunits: alpha(3), beta(3), gamma(1), delta(1), epsilon(1). CF(0) has three main subunits: a, b and c.

The protein resides in the cell inner membrane. In terms of biological role, produces ATP from ADP in the presence of a proton gradient across the membrane. This Enterobacter sp. (strain 638) protein is ATP synthase epsilon chain.